The primary structure comprises 344 residues: Fructose-1,6-bisphosphatase class 1 (344 aa).

Mg(2+) is bound by residues Glu-92, Asp-115, Leu-117, and Asp-118. Residues 118–121, Asn-211, Tyr-244, and Lys-274 each bind substrate; that span reads DGSS. Glu-280 contacts Mg(2+).

This sequence belongs to the FBPase class 1 family. As to quaternary structure, homotetramer. The cofactor is Mg(2+).

Its subcellular location is the cytoplasm. It catalyses the reaction beta-D-fructose 1,6-bisphosphate + H2O = beta-D-fructose 6-phosphate + phosphate. It participates in carbohydrate biosynthesis; gluconeogenesis. The protein is Fructose-1,6-bisphosphatase class 1 of Aeromonas salmonicida (strain A449).